The following is a 245-amino-acid chain: 4-hydroxy-tetrahydrodipicolinate reductase (245 aa).

Residues 7–12 (GAKGKV), 75–77 (GTT), and 102–105 (APNF) contribute to the NAD(+) site. His132 (proton donor/acceptor) is an active-site residue. His133 contacts (S)-2,3,4,5-tetrahydrodipicolinate. The active-site Proton donor is Lys136. Position 142–143 (142–143 (GT)) interacts with (S)-2,3,4,5-tetrahydrodipicolinate.

It belongs to the DapB family.

The protein localises to the cytoplasm. The enzyme catalyses (S)-2,3,4,5-tetrahydrodipicolinate + NAD(+) + H2O = (2S,4S)-4-hydroxy-2,3,4,5-tetrahydrodipicolinate + NADH + H(+). It catalyses the reaction (S)-2,3,4,5-tetrahydrodipicolinate + NADP(+) + H2O = (2S,4S)-4-hydroxy-2,3,4,5-tetrahydrodipicolinate + NADPH + H(+). It participates in amino-acid biosynthesis; L-lysine biosynthesis via DAP pathway; (S)-tetrahydrodipicolinate from L-aspartate: step 4/4. Functionally, catalyzes the conversion of 4-hydroxy-tetrahydrodipicolinate (HTPA) to tetrahydrodipicolinate. The sequence is that of 4-hydroxy-tetrahydrodipicolinate reductase from Mycobacterium bovis (strain BCG / Pasteur 1173P2).